The primary structure comprises 392 residues: Gastricsin (392 aa).

The signal sequence occupies residues 1-16; that stretch reads MKWMVVALLCLPLLEA. The propeptide at 17 to 62 is activation peptide; it reads ALIRVPLKKMKSIRETMKEQGVLKDFLKNHKYDPGQKYHFGKFGDY. A Peptidase A1 domain is found at 76–389; sequence YYGEISIGTP…DMGNNRVGLA (314 aa). The active site involves Asp94. Intrachain disulfides connect Cys107–Cys112 and Cys270–Cys275. The active site involves Asp280. Cys314 and Cys347 are oxidised to a cystine.

This sequence belongs to the peptidase A1 family.

It is found in the secreted. The enzyme catalyses More restricted specificity than pepsin A, but shows preferential cleavage at Tyr-|-Xaa bonds. High activity on hemoglobin.. Functionally, hydrolyzes a variety of proteins. In Mus musculus (Mouse), this protein is Gastricsin (Pgc).